Consider the following 486-residue polypeptide: Protein nucleotidyltransferase YdiU (486 aa).

Residues Gly-90, Gly-92, Arg-93, Lys-113, Asp-125, Gly-126, Arg-176, and Arg-183 each contribute to the ATP site. Asp-252 acts as the Proton acceptor in catalysis. Residues Asn-253 and Asp-262 each contribute to the Mg(2+) site. Asp-262 lines the ATP pocket.

Belongs to the SELO family. The cofactor is Mg(2+). Requires Mn(2+) as cofactor.

The catalysed reaction is L-seryl-[protein] + ATP = 3-O-(5'-adenylyl)-L-seryl-[protein] + diphosphate. It catalyses the reaction L-threonyl-[protein] + ATP = 3-O-(5'-adenylyl)-L-threonyl-[protein] + diphosphate. The enzyme catalyses L-tyrosyl-[protein] + ATP = O-(5'-adenylyl)-L-tyrosyl-[protein] + diphosphate. It carries out the reaction L-histidyl-[protein] + UTP = N(tele)-(5'-uridylyl)-L-histidyl-[protein] + diphosphate. The catalysed reaction is L-seryl-[protein] + UTP = O-(5'-uridylyl)-L-seryl-[protein] + diphosphate. It catalyses the reaction L-tyrosyl-[protein] + UTP = O-(5'-uridylyl)-L-tyrosyl-[protein] + diphosphate. In terms of biological role, nucleotidyltransferase involved in the post-translational modification of proteins. It can catalyze the addition of adenosine monophosphate (AMP) or uridine monophosphate (UMP) to a protein, resulting in modifications known as AMPylation and UMPylation. In Pseudomonas entomophila (strain L48), this protein is Protein nucleotidyltransferase YdiU.